The primary structure comprises 369 residues: 4-hydroxyproline betaine 2-epimerase (369 aa).

Substrate is bound by residues tyrosine 56 and glutamine 162. The active-site Proton donor/acceptor is lysine 164. Residues aspartate 194, glutamate 219, and aspartate 242 each coordinate Mg(2+). Catalysis depends on lysine 266, which acts as the Proton donor/acceptor. Position 295 (alanine 295) interacts with substrate.

This sequence belongs to the mandelate racemase/muconate lactonizing enzyme family. Mg(2+) is required as a cofactor.

It catalyses the reaction trans-4-hydroxy-L-proline betaine = cis-4-hydroxy-D-proline betaine. The catalysed reaction is L-proline betaine = D-proline betaine. Functionally, catalyzes the 2-epimerization of trans-4-hydroxy-L-proline betaine (tHyp-B) to cis-4-hydroxy-D-proline betaine (cHyp-B). Is involved in a catabolic pathway that degrades tHyp-B to alpha-ketoglutarate. This pathway would permit the utilization of tHyp-B as a carbon and nitrogen source in the absence of osmotic stress, since tHyp-B functions as an osmolyte and is not catabolized when it is needed as osmoprotectant. Can also catalyze the racemization of L-proline betaine. This chain is 4-hydroxyproline betaine 2-epimerase (hpbD), found in Paracoccus denitrificans (strain Pd 1222).